Reading from the N-terminus, the 78-residue chain is Large ribosomal subunit protein bL28 (78 aa).

The segment at 1 to 21 is disordered; the sequence is MSRVCQVTGKKPMVGNNRSHA.

The protein belongs to the bacterial ribosomal protein bL28 family.

The protein is Large ribosomal subunit protein bL28 of Shewanella loihica (strain ATCC BAA-1088 / PV-4).